Consider the following 283-residue polypeptide: uncharacterized protein (283 aa).

Positions 1–10 (MELNKTSESL) are enriched in polar residues. Disordered regions lie at residues 1 to 99 (MELN…NPTS) and 255 to 283 (DQEG…EAHI). 3 stretches are compositionally biased toward basic and acidic residues: residues 14-34 (KIDH…REVR), 42-53 (SSTRQEKADRMP), and 61-71 (ESSKGSEEGAV).

This sequence belongs to the chlamydial CPn_0705/CT_671/TC_0042 family.

This is an uncharacterized protein from Chlamydia trachomatis serovar D (strain ATCC VR-885 / DSM 19411 / UW-3/Cx).